Reading from the N-terminus, the 380-residue chain is Putative 12-oxophytodienoate reductase 4 (380 aa).

FMN-binding positions include 36 to 38, alanine 69, and glutamine 111; that span reads PLT. 183–186 lines the substrate pocket; it reads HGAH. Tyrosine 188 acts as the Proton donor in catalysis. Arginine 235 provides a ligand contact to FMN. Arginine 276 contributes to the substrate binding site. FMN-binding positions include glycine 306 and 327–328; that span reads GR.

This sequence belongs to the NADH:flavin oxidoreductase/NADH oxidase family. Requires FMN as cofactor.

Putative oxophytodienoate reductase that may be involved in the biosynthesis or metabolism of oxylipin signaling molecules. The sequence is that of Putative 12-oxophytodienoate reductase 4 (OPR4) from Oryza sativa subsp. japonica (Rice).